Consider the following 166-residue polypeptide: Nucleotide-binding protein Acid_3194 (166 aa).

It belongs to the YajQ family.

Functionally, nucleotide-binding protein. This chain is Nucleotide-binding protein Acid_3194, found in Solibacter usitatus (strain Ellin6076).